Reading from the N-terminus, the 192-residue chain is GTP-dependent dephospho-CoA kinase (192 aa).

The GTP site is built by Asp-49, Val-50, Val-51, Asp-68, Lys-70, and Glu-127.

Belongs to the GTP-dependent DPCK family.

It carries out the reaction 3'-dephospho-CoA + GTP = GDP + CoA + H(+). It functions in the pathway cofactor biosynthesis; coenzyme A biosynthesis. Catalyzes the GTP-dependent phosphorylation of the 3'-hydroxyl group of dephosphocoenzyme A to form coenzyme A (CoA). This Halorubrum lacusprofundi (strain ATCC 49239 / DSM 5036 / JCM 8891 / ACAM 34) protein is GTP-dependent dephospho-CoA kinase.